Consider the following 266-residue polypeptide: Integral membrane protein 2B (266 aa).

Over 1 to 54 (MVKVTFNSALAQKEAKKDEPKSSEEALIAPPDAVAVDCKDPDDVVPVGQRRAWC) the chain is Cytoplasmic. The chain crosses the membrane as a helical; Signal-anchor for type II membrane protein span at residues 55-75 (WCMCFGLAFMLAGVILGGAYL). Residues 76–266 (YKYFALQPDD…KFAVETLICS (191 aa)) are Lumenal-facing. A necessary for interaction with APP and inhibitor effects on APP processing region spans residues 102–134 (EPSADAPAARYQTIEENIKIFEEDAVEFISVPV). A BRICHOS domain is found at 137–231 (FADSDPANIV…LCHDKETYKL (95 aa)). Intrachain disulfides connect Cys164–Cys223 and Cys248–Cys265. Asn170 carries N-linked (GlcNAc...) asparagine glycosylation.

It belongs to the ITM2 family. Homodimer; disulfide-linked. Interacts with SPPL2A and SPPL2B. Interacts with APP. Mature BRI2 (mBRI2) interacts with the APP amyloid-beta A4 protein; the interaction occurs at the cell surface and in the endocytic compartments and enable alpha- and beta-secretase-induced APP cleavage inhibition. Mature BRI2 (mBRI2) interacts with the APP C99; the interaction occurs in the endocytic compartments and enable gamma-secretase-induced C99 cleavage inhibition. May form heterodimers with Bri23 peptide and APP amyloid-beta protein 40. Interacts with ADAM7 in sperm; the interaction increases following capacitation. In terms of processing, the ectodomain C-terminal part of the imBRI2 is processed by furin producing a secreted Bri23 peptide and a mature BRI2, membrane form (mBRI2). The remaining part of the ectodomain of mBRI2 containing the BRICHOS domain is cleaved by ADAM10 and is secreted (BRI2C, soluble form). The membrane-bound N-terminal fragment (BRI2C, membrane form) is further proteolytically processed by SPPL2A and SPPL2B through regulated intramembrane proteolysis producing a secreted C-peptide and a BRI2 intracellular domain (BRI2 ICD) released in the cytosol. Shedding by ADAM10 facilitates intramembrane cleavage but is not absolutely required for BRI2 ICD generation. Post-translationally, glycosylation at Asn-170 is important for cell surface localization, but doesn't affect furin- and ADAM10-induced proteolytic processing.

Its subcellular location is the golgi apparatus membrane. It localises to the cell membrane. It is found in the endosome membrane. The protein resides in the secreted. Functionally, plays a regulatory role in the processing of the amyloid-beta A4 precursor protein (APP) and acts as an inhibitor of the amyloid-beta peptide aggregation and fibrils deposition. Plays a role in the induction of neurite outgrowth. Functions as a protease inhibitor by blocking access of secretases to APP cleavage sites. Mature BRI2 (mBRI2) functions as a modulator of the amyloid-beta A4 precursor protein (APP) processing leading to a strong reduction in the secretion of secretase-processed amyloid-beta protein 40 and amyloid-beta protein 42. In terms of biological role, bri23 peptide prevents aggregation of APP amyloid-beta protein 42 into toxic oligomers. The protein is Integral membrane protein 2B (Itm2b) of Rattus norvegicus (Rat).